The chain runs to 295 residues: 4-diphosphocytidyl-2-C-methyl-D-erythritol kinase (295 aa).

Lys15 is a catalytic residue. 102 to 112 (PIASGVGGGSS) is an ATP binding site. The active site involves Asp144.

The protein belongs to the GHMP kinase family. IspE subfamily.

The catalysed reaction is 4-CDP-2-C-methyl-D-erythritol + ATP = 4-CDP-2-C-methyl-D-erythritol 2-phosphate + ADP + H(+). It functions in the pathway isoprenoid biosynthesis; isopentenyl diphosphate biosynthesis via DXP pathway; isopentenyl diphosphate from 1-deoxy-D-xylulose 5-phosphate: step 3/6. Its function is as follows. Catalyzes the phosphorylation of the position 2 hydroxy group of 4-diphosphocytidyl-2C-methyl-D-erythritol. The polypeptide is 4-diphosphocytidyl-2-C-methyl-D-erythritol kinase (Mesorhizobium japonicum (strain LMG 29417 / CECT 9101 / MAFF 303099) (Mesorhizobium loti (strain MAFF 303099))).